We begin with the raw amino-acid sequence, 623 residues long: MPHSDELDSRDVLSVSGLNIAFHHEGQQVDAVRNVSLRLKRGETLAIVGESGSGKSVTALALMRLIEQSGANVRCGEMLLRRRNRQVIELSEQSDAQMRRVRGADIAMIFQEPMTSLNPVFTVGEQIAESIRLHQRASHEEALAEAKRMLDQVRIPESQAILSRYPHQLSGGMRQRVMIAMALSCRPAVLIADEPTTALDVTIQAQILQLIKVLQQEMSMGVIFITHDMGVVADIADRVLVMYQGEAVETGSVEQIFHAPTHPYTQTLLAAVPQLGAMRGHSLPRRFPLISADEPALYESQIEQDTVVEGEPILQVRGLVTRFPLRSGLFNRVTREVHAVENISFDLWPGETLSLVGESGSGKSTTGRALLRLVESRQGEIIFNGQRIDTLSAGKLQPLRRDIQCIFQDPYASLDPRQTVGYSIMEPLRIHGLGQGDAAAKRVAWLLERVGLRPEHAWRYPHEFSGGQRQRICIARALALNPKVIIADEAVSALDVSVRGQIINLLLDLQREMGIAYLFISHDMAVVERISHRVAVMYLGQIVEMGPRRAVFENPQHPYTRKLMAAVPVADPSRHRPRRVLLSDDIPSNIHKRGEETPAVSLQLVGPGHYVARPLQDNALSRL.

ABC transporter domains are found at residues 15–269 and 325–564; these read VSGL…QTLL and LRSG…RKLM. Residues 49-56 and 357-364 contribute to the ATP site; these read GESGSGKS.

It belongs to the ABC transporter superfamily. Glutathione importer (TC 3.A.1.5.11) family. The complex is composed of two ATP-binding proteins (GsiA), two transmembrane proteins (GsiC and GsiD) and a solute-binding protein (GsiB).

It is found in the cell inner membrane. It catalyses the reaction glutathione(out) + ATP + H2O = glutathione(in) + ADP + phosphate + H(+). Its function is as follows. Part of the ABC transporter complex GsiABCD involved in glutathione import. Responsible for energy coupling to the transport system. The protein is Glutathione import ATP-binding protein GsiA of Salmonella choleraesuis (strain SC-B67).